The sequence spans 855 residues: Dynein axonemal assembly factor 5 (855 aa).

An N-acetylalanine modification is found at A2. 10 HEAT repeats span residues 71 to 109, 202 to 240, 241 to 278, 280 to 318, 354 to 376, 377 to 414, 599 to 638, 696 to 734, 738 to 776, and 784 to 822; these read GPWA…RAAR, HMQS…FGNG, KSVD…CLRD, YSFF…QWQK, FRNL…VGTR, VKSA…DEEA, GEAL…RATD, RDVQ…TSGG, PEKL…CVKG, and QSSV…LFPD.

Belongs to the DNAAF5 family. Interacts with DNAI2; probably involved in outer arm dynein assembly. In terms of tissue distribution, expressed in nasal epithelium and lung epithelium by ciliated cells (at protein level).

The protein localises to the cytoplasm. It is found in the dynein axonemal particle. Its function is as follows. Cytoplasmic protein involved in the delivery of the dynein machinery to the motile cilium. It is required for the assembly of the axonemal dynein inner and outer arms, two structures attached to the peripheral outer doublet A microtubule of the axoneme, that play a crucial role in cilium motility. The chain is Dynein axonemal assembly factor 5 from Homo sapiens (Human).